The following is a 432-amino-acid chain: Myb family transcription factor EFM (432 aa).

The stretch at 36–81 (LEDLLSRLEQERLKIDAFKRELPLCMQLLNNAVEVYKQQLEAYRAN) forms a coiled coil. 2 stretches are compositionally biased toward polar residues: residues 123–139 (SQSE…TDQS) and 187–197 (SPTNEHTNGQD). The segment at 123–237 (SQSETKPKNI…SQSNRKARRC (115 aa)) is disordered. The span at 201–231 (ESMINNDNNYNNNNNNNSNSNGVSSTTSQSN) shows a compositional bias: low complexity. Residues 230–290 (SNRKARRCWS…HLQKYRLHTR (61 aa)) enclose the HTH myb-type domain. Positions 261 to 286 (PKQIRELMKVDGLTNDEVKSHLQKYR) form a DNA-binding region, H-T-H motif. Positions 354-412 (FYTTPPPPQPLHHHHFQTFNGSSGGTASTDSTHHQVTDSPTVEGKSPESGGGERKGLAA) are disordered.

In terms of assembly, interacts with JMJ30, but not with SVP, FLC or CO. In terms of tissue distribution, specifically expressed in vascular tissues of cotyledons, rosette leaves and cauline leaves. Not detected in the vegetative shoot apical meristem.

The protein resides in the nucleus. Functionally, transcription factor acting as a flowering repressor, directly repressing FT expression in a dosage-dependent manner in the leaf vasculature. This chain is Myb family transcription factor EFM, found in Arabidopsis thaliana (Mouse-ear cress).